Here is a 521-residue protein sequence, read N- to C-terminus: Cytochrome P450 1A1 (521 aa).

Phe-229 lines the substrate pocket. Cys-463 contacts heme.

The protein belongs to the cytochrome P450 family. Heme is required as a cofactor.

The protein localises to the endoplasmic reticulum membrane. The protein resides in the microsome membrane. The catalysed reaction is an organic molecule + reduced [NADPH--hemoprotein reductase] + O2 = an alcohol + oxidized [NADPH--hemoprotein reductase] + H2O + H(+). In terms of biological role, cytochromes P450 are a group of heme-thiolate monooxygenases. They oxidize a variety of structurally unrelated compounds, including steroids, fatty acids, and xenobiotics. In Sparus aurata (Gilthead sea bream), this protein is Cytochrome P450 1A1 (cyp1a1).